The following is a 559-amino-acid chain: 2,3-bisphosphoglycerate-independent phosphoglycerate mutase (559 aa).

Mn(2+) is bound by residues Asp28 and Ser81. Ser81 (phosphoserine intermediate) is an active-site residue. Residues His140, 170-171 (RD), Arg206, Arg213, 286-289 (RADR), and Lys361 each bind substrate. The Mn(2+) site is built by Asp430, His434, Asp471, His472, and His501.

The protein belongs to the BPG-independent phosphoglycerate mutase family. In terms of assembly, monomer. It depends on Mn(2+) as a cofactor.

Its subcellular location is the cytoplasm. The enzyme catalyses (2R)-2-phosphoglycerate = (2R)-3-phosphoglycerate. It functions in the pathway carbohydrate degradation; glycolysis; pyruvate from D-glyceraldehyde 3-phosphate: step 3/5. In terms of biological role, catalyzes the interconversion of 2-phosphoglycerate and 3-phosphoglycerate. This is 2,3-bisphosphoglycerate-independent phosphoglycerate mutase (PGM1) from Mesembryanthemum crystallinum (Common ice plant).